The following is a 75-amino-acid chain: UPF0270 protein PP_1747 (75 aa).

Belongs to the UPF0270 family.

The protein is UPF0270 protein PP_1747 of Pseudomonas putida (strain ATCC 47054 / DSM 6125 / CFBP 8728 / NCIMB 11950 / KT2440).